The following is a 167-amino-acid chain: Ribosome maturation factor RimM (167 aa).

The region spanning 94 to 166 (QNRAWLHELE…YIVVPRFDEF (73 aa)) is the PRC barrel domain.

Belongs to the RimM family. In terms of assembly, binds ribosomal protein uS19.

It is found in the cytoplasm. Its function is as follows. An accessory protein needed during the final step in the assembly of 30S ribosomal subunit, possibly for assembly of the head region. Essential for efficient processing of 16S rRNA. May be needed both before and after RbfA during the maturation of 16S rRNA. It has affinity for free ribosomal 30S subunits but not for 70S ribosomes. The chain is Ribosome maturation factor RimM from Chlorobium phaeovibrioides (strain DSM 265 / 1930) (Prosthecochloris vibrioformis (strain DSM 265)).